We begin with the raw amino-acid sequence, 278 residues long: uncharacterized protein (278 aa).

Residues 1–34 (MAKTIKVIRKKDPKKKNLSDPLAKQKLVWKIGHV) lie on the Cytoplasmic side of the membrane. A helical membrane pass occupies residues 35 to 55 (LTLVFGLLFSITYFYHVLIFF). Residues 56 to 129 (KYRSWKWLFL…DLLSSENFHT (74 aa)) lie on the Extracellular side of the membrane. A helical membrane pass occupies residues 130-150 (LLIACLWFFGGGKSFYKILPY). The Cytoplasmic portion of the chain corresponds to 151 to 180 (MILSYLHLTKMNYELNANKEEKIPLTPKDR). A helical transmembrane segment spans residues 181 to 201 (KMLHLLAYSELLVILALTLDT). Residues 202–205 (ILFK) are Extracellular-facing. A helical transmembrane segment spans residues 206-222 (TGTSGFMLVIYVGIYWL). Residues 223–278 (RLNFSPYAQVAVLELLVKFEKYVPKKYRDKWQVIKNFIYMKMKEHEKRTEEVARYA) are Cytoplasmic-facing.

The protein resides in the cell membrane. This is an uncharacterized protein from Saccharomyces cerevisiae (strain ATCC 204508 / S288c) (Baker's yeast).